The chain runs to 428 residues: 3-phosphoshikimate 1-carboxyvinyltransferase (428 aa).

3-phosphoshikimate-binding residues include K23, S24, and R28. K23 provides a ligand contact to phosphoenolpyruvate. Phosphoenolpyruvate contacts are provided by G97 and R125. Residues S170, S171, Q172, S198, D314, N337, and K341 each contribute to the 3-phosphoshikimate site. Phosphoenolpyruvate is bound at residue Q172. Residue D314 is the Proton acceptor of the active site. R345, R387, and K412 together coordinate phosphoenolpyruvate.

This sequence belongs to the EPSP synthase family. In terms of assembly, monomer.

It localises to the cytoplasm. The catalysed reaction is 3-phosphoshikimate + phosphoenolpyruvate = 5-O-(1-carboxyvinyl)-3-phosphoshikimate + phosphate. It participates in metabolic intermediate biosynthesis; chorismate biosynthesis; chorismate from D-erythrose 4-phosphate and phosphoenolpyruvate: step 6/7. Functionally, catalyzes the transfer of the enolpyruvyl moiety of phosphoenolpyruvate (PEP) to the 5-hydroxyl of shikimate-3-phosphate (S3P) to produce enolpyruvyl shikimate-3-phosphate and inorganic phosphate. The polypeptide is 3-phosphoshikimate 1-carboxyvinyltransferase (Buchnera aphidicola subsp. Schizaphis graminum (strain Sg)).